A 529-amino-acid polypeptide reads, in one-letter code: MPIYFLVLKGTGHVQALAFPKSVSDCLGRVTDTEPMLQQSIEACDRVSTETQQLLDILKQQQDDSVLEIQDTLTIAAQGLGPQQRLCAALALLHEREPSIVQQYHDVVGSLSLPEMLKTSHVARSITFHSLLHYERLCTRLHYCHLQQSVHKQKPVRMPGKLRGRWWCQESEPQQVRFGQNVRKHVVSIGGVYAQERCMTTWSTYSVDICLINLSLTRDRPASVGGLQLQVYRISASHAEPSGKRVGHIRHRAGTRQQLQEELCTKKEKLAEMTVLTQEKLSEVIKLREITMASKAESVKLACLQKLVSPQTVSRVLSFSGISYNRLILFYVRQFIFGLAWSLSCQLPLAERHSLSNLVCRYYSDYLDQPSSEVSTKTLLTLALGMQAMLTTRTTYSLISWRLRTSIQTVSTGSVRWILCLSALPTQRLLAQILRNVPWSQRRTQFQIRPISMHHRPYGYQATVQHPPPQSSYEEDGRRPPTQPAHTSLLTYVCSINSEYWQLNDPENCELRSFFFLQSIESMSTPSSH.

The interval 460–484 (YQATVQHPPPQSSYEEDGRRPPTQP) is disordered.

The chain is Heat shock protein 60 from Giardia intestinalis (Giardia lamblia).